The chain runs to 387 residues: Probable 1-alkyl-2-acetylglycerophosphocholine esterase (387 aa).

The signal sequence occupies residues 1-17; it reads MLVQGTIICALVANAIA. N-linked (GlcNAc...) asparagine glycosylation is found at Asn-51 and Asn-141. Ser-227 serves as the catalytic Nucleophile. The active-site Charge relay system is Asp-250. Asn-283 carries N-linked (GlcNAc...) asparagine glycosylation. His-313 (charge relay system) is an active-site residue.

The protein belongs to the AB hydrolase superfamily. Lipase family.

The protein localises to the secreted. The enzyme catalyses a 1-O-alkyl-2-acetyl-sn-glycero-3-phosphocholine + H2O = a 1-O-alkyl-sn-glycero-3-phosphocholine + acetate + H(+). This Arthroderma benhamiae (strain ATCC MYA-4681 / CBS 112371) (Trichophyton mentagrophytes) protein is Probable 1-alkyl-2-acetylglycerophosphocholine esterase.